We begin with the raw amino-acid sequence, 85 residues long: Latartoxin-1a (85 aa).

Positions 1–19 (MKVLVFAIVCSVLLQVVLS) are cleaved as a signal peptide. The propeptide at 20–25 (ADEEAR) is removed in mature form. The Processing quadruplet motif signature appears at 22 to 25 (EEAR). Intrachain disulfides connect Cys-27-Cys-42, Cys-34-Cys-47, Cys-41-Cys-64, and Cys-49-Cys-62.

Belongs to the neurotoxin 19 (CSTX) family. Post-translationally, contains 4 disulfide bonds. In terms of processing, cleavage of the propeptide depends on the processing quadruplet motif (XXXR, with at least one of X being E). As to expression, expressed by the venom gland.

Its subcellular location is the secreted. Functionally, insect toxin. Causes paralysis in larvae of C.vicina by depolarizing membranes at the neuromuscular junction. The chain is Latartoxin-1a from Lachesana tarabaevi (Spider).